We begin with the raw amino-acid sequence, 533 residues long: Invertase (533 aa).

Residues 1–22 (MVQVLSVLVIPLLTLFFGYVAS) form the signal peptide. Residues 47-50 (WMND) and Gln-68 each bind substrate. Residue Asp-50 is part of the active site. Asn-72 carries N-linked (GlcNAc...) asparagine glycosylation. 110–111 (FS) contacts substrate. Residues Asn-119, Asn-120, and Asn-126 are each glycosylated (N-linked (GlcNAc...) asparagine). 178 to 179 (RD) contributes to the substrate binding site. An N-linked (GlcNAc...) asparagine glycan is attached at Asn-219. Trp-314 lines the substrate pocket. Asn-334, Asn-392, and Asn-419 each carry an N-linked (GlcNAc...) asparagine glycan.

This sequence belongs to the glycosyl hydrolase 32 family.

It catalyses the reaction Hydrolysis of terminal non-reducing beta-D-fructofuranoside residues in beta-D-fructofuranosides.. The protein is Invertase (INV) of Schwanniomyces occidentalis (Yeast).